The following is an 806-amino-acid chain: Centrosomal protein of 85 kDa-like (806 aa).

3 disordered regions span residues 1–27, 51–89, and 101–146; these read MWGRFLAPEAGGRDSPSGARSFPAGSD, NNHLRRHSITSDSGDTGIGTSCSDSVEDHSTSSGTLSFK, and HVMP…SSLD. At Ser15 the chain carries Phosphoserine. Residues 60 to 74 are compositionally biased toward polar residues; sequence TSDSGDTGIGTSCSD. A compositionally biased stretch (basic and acidic residues) spans 135 to 146; the sequence is DHSRGERDSSLD. Ser207 is modified (phosphoserine). Positions 308-353 are disordered; sequence PLEGRTTDDSYSLAPWQQPQTEEFQQGSETPMQVLTGSSRQSYSPP. Positions 322–351 are enriched in polar residues; it reads PWQQPQTEEFQQGSETPMQVLTGSSRQSYS. The stretch at 442–644 forms a coiled coil; the sequence is QEELEQKLAS…ILEIQSMQGK (203 aa).

The protein belongs to the CEP85 family.

The protein localises to the cytoplasm. It localises to the cytoskeleton. Its subcellular location is the microtubule organizing center. The protein resides in the centrosome. Functionally, plays an essential role in neuronal cell migration. This is Centrosomal protein of 85 kDa-like from Mus musculus (Mouse).